The sequence spans 167 residues: Mediator of RNA polymerase II transcription subunit 10 (167 aa).

A disordered region spans residues 54–92 (STHTKPHPPPPPPPQPTDPTTAAAPALRDNPDPPLSSIQ). Pro residues predominate over residues 60–70 (HPPPPPPPQPT).

It belongs to the Mediator complex subunit 10 family. In terms of assembly, component of the Mediator complex.

The protein resides in the nucleus. Its function is as follows. Component of the Mediator complex, a coactivator involved in the regulated transcription of nearly all RNA polymerase II-dependent genes. Mediator functions as a bridge to convey information from gene-specific regulatory proteins to the basal RNA polymerase II transcription machinery. Mediator is recruited to promoters by direct interactions with regulatory proteins and serves as a scaffold for the assembly of a functional preinitiation complex with RNA polymerase II and the general transcription factors. In Aspergillus clavatus (strain ATCC 1007 / CBS 513.65 / DSM 816 / NCTC 3887 / NRRL 1 / QM 1276 / 107), this protein is Mediator of RNA polymerase II transcription subunit 10 (nut2).